Consider the following 446-residue polypeptide: Probable 1,4-beta-D-glucan cellobiohydrolase A (446 aa).

The first 17 residues, Met1–Ala17, serve as a signal peptide directing secretion. An N-linked (GlcNAc...) asparagine glycan is attached at Asn81. Glu226 functions as the Nucleophile in the catalytic mechanism. Glu231 serves as the catalytic Proton donor. N-linked (GlcNAc...) asparagine glycosylation is found at Asn284 and Asn333. Positions Thr399 to Pro420 are disordered.

Belongs to the glycosyl hydrolase 7 (cellulase C) family.

The protein resides in the secreted. It catalyses the reaction Hydrolysis of (1-&gt;4)-beta-D-glucosidic linkages in cellulose and cellotetraose, releasing cellobiose from the non-reducing ends of the chains.. In terms of biological role, the biological conversion of cellulose to glucose generally requires three types of hydrolytic enzymes: (1) Endoglucanases which cut internal beta-1,4-glucosidic bonds; (2) Exocellobiohydrolases that cut the disaccharide cellobiose from the non-reducing end of the cellulose polymer chain; (3) Beta-1,4-glucosidases which hydrolyze the cellobiose and other short cello-oligosaccharides to glucose. In Emericella nidulans (strain FGSC A4 / ATCC 38163 / CBS 112.46 / NRRL 194 / M139) (Aspergillus nidulans), this protein is Probable 1,4-beta-D-glucan cellobiohydrolase A (cbhA).